The chain runs to 209 residues: Thymidylate kinase (209 aa).

10-17 lines the ATP pocket; the sequence is GIDGCGKT.

It belongs to the thymidylate kinase family.

It carries out the reaction dTMP + ATP = dTDP + ADP. In terms of biological role, phosphorylation of dTMP to form dTDP in both de novo and salvage pathways of dTTP synthesis. The chain is Thymidylate kinase from Synechococcus sp. (strain CC9605).